The chain runs to 268 residues: MSRPEHIAPPEIFYNDVEAGKYSTNTRIQSIQTEMSERALELLDAEGPSFILDIGCGSGISTQIGESQGHVVVGMDISPSMLSVALESQEIEGDLLLCDMGTGVPFRPGTFDGVISISAIQWLLNADKTCNVPQRRLNRFFQTLYISMKRGGRAVMQYYPETEKSQQMIMDTARKAGFAGGIVVDHPESKRQKKYYLVLQAGGTRTLDISSMTLDQEGTNAKQRKLKKKQDMSTREYIIHKKELNRKRGRLHVPKDSKYSGRRRKAAF.

The disordered stretch occupies residues arginine 246–phenylalanine 268.

It belongs to the class I-like SAM-binding methyltransferase superfamily. BUD23/WBSCR22 family.

It is found in the cytoplasm. The protein localises to the nucleus. The enzyme catalyses a guanosine in 18S rRNA + S-adenosyl-L-methionine = an N(7)-methylguanosine in 18S rRNA + S-adenosyl-L-homocysteine. Functionally, S-adenosyl-L-methionine-dependent methyltransferase that specifically methylates the N(7) position of a guanine in 18S rRNA. Important for biogenesis end export of the 40S ribosomal subunit independent on its methyltransferase activity. In Schizosaccharomyces pombe (strain 972 / ATCC 24843) (Fission yeast), this protein is 18S rRNA (guanine-N(7))-methyltransferase bud23 (bud23).